The following is a 55-amino-acid chain: ATP synthase small subunit 6, mitochondrial (55 aa).

The N-terminal 15 residues, 1-15, are a transit peptide targeting the mitochondrion; that stretch reads MRQFDPWPVFFRREW. A helical transmembrane segment spans residues 20-39; it reads PFLVGFAVTGAIITKMSLGF.

The protein belongs to the ATPase 6 subunit family.

The protein localises to the mitochondrion inner membrane. Its function is as follows. Mitochondrial membrane ATP synthase (F(1)F(0) ATP synthase or Complex V) produces ATP from ADP in the presence of a proton gradient across the membrane which is generated by electron transport complexes of the respiratory chain. F-type ATPases consist of two structural domains, F(1) - containing the extramembraneous catalytic core and F(0) - containing the membrane proton channel, linked together by a central stalk and a peripheral stalk. During catalysis, ATP synthesis in the catalytic domain of F(1) is coupled via a rotary mechanism of the central stalk subunits to proton translocation. Part of the complex F(0) domain. Confers tolerance to several abiotic stresses (e.g. salt, mannitol, drought, oxidative and cold stresses), probably by providing additional energy needed for cell homeostasis. The chain is ATP synthase small subunit 6, mitochondrial from Solanum tuberosum (Potato).